Consider the following 137-residue polypeptide: Large ribosomal subunit protein uL16 (137 aa).

The protein belongs to the universal ribosomal protein uL16 family. In terms of assembly, part of the 50S ribosomal subunit.

Functionally, binds 23S rRNA and is also seen to make contacts with the A and possibly P site tRNAs. The polypeptide is Large ribosomal subunit protein uL16 (Lactococcus lactis subsp. lactis (strain IL1403) (Streptococcus lactis)).